Reading from the N-terminus, the 339-residue chain is MEGEPPPVEERRRLQEELNEFVESGCRTLEEVTASLGWDLDSLDPGEEEAAEDEVVICPYDSNHHMPKSSLAKHMASCRLRKMGYTKEEEDEMYNPEFFYENVKIPSITLNKDSQFQIIKQARTAVGKDSDCYNQRIYSSLPVEVPLNHKRFVCDLTQADRLALYDFVVEETKKKRSDSQIIENDSDLFVDLAAKINQDNSRKSPKSYLEILAEVRDYKRRRQSYRAKNVHITKKSYTEVIRDVINVHMEELSNHWQEEQEKAEDDAEKNEERRSASVDSRQSGGSYLDAECSRHRRDRSRSPHKRKRNKDKDKNCESRRRKERDGERHHSHKRRKQKI.

The CHHC U11-48K-type zinc-finger motif lies at 55 to 82; sequence VVICPYDSNHHMPKSSLAKHMASCRLRK. Zn(2+)-binding residues include C58, H64, H74, and C78. Glycyl lysine isopeptide (Lys-Gly) (interchain with G-Cter in SUMO2) cross-links involve residues K87 and K104. Residues 255–339 are disordered; the sequence is HWQEEQEKAE…HSHKRRKQKI (85 aa). Over residues 294–309 the composition is skewed to basic residues; the sequence is RHRRDRSRSPHKRKRN. Basic and acidic residues predominate over residues 310–328; the sequence is KDKDKNCESRRRKERDGER. Positions 329–339 are enriched in basic residues; it reads HHSHKRRKQKI.

In terms of assembly, component of the U11/U12 snRNPs that are part of the U12-type spliceosome. Not found in the major spliceosome.

The protein resides in the nucleus. Likely involved in U12-type 5' splice site recognition. The sequence is that of U11/U12 small nuclear ribonucleoprotein 48 kDa protein (SNRNP48) from Homo sapiens (Human).